A 470-amino-acid chain; its full sequence is Glucose-1-phosphate adenylyltransferase (470 aa).

Alpha-D-glucose 1-phosphate-binding positions include glycine 164, 181 to 182 (EK), and serine 199.

Belongs to the bacterial/plant glucose-1-phosphate adenylyltransferase family. In terms of assembly, homotetramer.

The catalysed reaction is alpha-D-glucose 1-phosphate + ATP + H(+) = ADP-alpha-D-glucose + diphosphate. Its pathway is glycan biosynthesis; glycogen biosynthesis. Involved in the biosynthesis of ADP-glucose, a building block required for the elongation reactions to produce glycogen. Catalyzes the reaction between ATP and alpha-D-glucose 1-phosphate (G1P) to produce pyrophosphate and ADP-Glc. In Pseudarthrobacter chlorophenolicus (strain ATCC 700700 / DSM 12829 / CIP 107037 / JCM 12360 / KCTC 9906 / NCIMB 13794 / A6) (Arthrobacter chlorophenolicus), this protein is Glucose-1-phosphate adenylyltransferase.